The chain runs to 477 residues: ATP synthase subunit beta (477 aa).

An ATP-binding site is contributed by 151-158; sequence GGAGVGKT.

Belongs to the ATPase alpha/beta chains family. In terms of assembly, F-type ATPases have 2 components, CF(1) - the catalytic core - and CF(0) - the membrane proton channel. CF(1) has five subunits: alpha(3), beta(3), gamma(1), delta(1), epsilon(1). CF(0) has three main subunits: a(1), b(2) and c(9-12). The alpha and beta chains form an alternating ring which encloses part of the gamma chain. CF(1) is attached to CF(0) by a central stalk formed by the gamma and epsilon chains, while a peripheral stalk is formed by the delta and b chains.

It is found in the cell inner membrane. The catalysed reaction is ATP + H2O + 4 H(+)(in) = ADP + phosphate + 5 H(+)(out). In terms of biological role, produces ATP from ADP in the presence of a proton gradient across the membrane. The catalytic sites are hosted primarily by the beta subunits. This is ATP synthase subunit beta from Bradyrhizobium diazoefficiens (strain JCM 10833 / BCRC 13528 / IAM 13628 / NBRC 14792 / USDA 110).